The primary structure comprises 191 residues: MSSDRHTPTKDPPDHPSSSSNHHKQPLPPQPQQPLSRYESQKRRDWNTFVQYLKSQNPPLMMSQFDYTHVLSFLRYLDQFGKTKVHHQACVFFGQPDPPGPCTCPLKQAWGSLDALIGRLRAAYEEHGGGSPDTNPFANGSIRVHLREVRESQAKARGIPYRKKKRRKTKNEVVVVKKDVANSSTPNQSFT.

The segment covering 1-14 (MSSDRHTPTKDPPD) has biased composition (basic and acidic residues). Disordered regions lie at residues 1–41 (MSSD…YESQ) and 153–191 (QAKARGIPYRKKKRRKTKNEVVVVKKDVANSSTPNQSFT). Residues 37–165 (RYESQKRRDW…ARGIPYRKKK (129 aa)) form the ALOG domain. Residues 160–169 (PYRKKKRRKT) show a composition bias toward basic residues. A Nuclear localization signal motif is present at residues 163-167 (KKKRR). The segment covering 181-191 (ANSSTPNQSFT) has biased composition (polar residues).

Belongs to the plant homeotic and developmental regulators ALOG protein family.

It localises to the nucleus. Its function is as follows. Probable transcription regulator that acts as a developmental regulator by promoting cell growth in response to light. The chain is Protein LIGHT-DEPENDENT SHORT HYPOCOTYLS 9 (LSH9) from Arabidopsis thaliana (Mouse-ear cress).